Here is a 691-residue protein sequence, read N- to C-terminus: Glycine--tRNA ligase beta subunit (691 aa).

The protein belongs to the class-II aminoacyl-tRNA synthetase family. Tetramer of two alpha and two beta subunits.

It is found in the cytoplasm. It carries out the reaction tRNA(Gly) + glycine + ATP = glycyl-tRNA(Gly) + AMP + diphosphate. This Levilactobacillus brevis (strain ATCC 367 / BCRC 12310 / CIP 105137 / JCM 1170 / LMG 11437 / NCIMB 947 / NCTC 947) (Lactobacillus brevis) protein is Glycine--tRNA ligase beta subunit.